Here is a 254-residue protein sequence, read N- to C-terminus: Phosphonates import ATP-binding protein PhnC (254 aa).

The 245-residue stretch at 2–246 folds into the ABC transporter domain; the sequence is IQLKNVSKIY…VFDDIYNGGN (245 aa). 35 to 42 provides a ligand contact to ATP; the sequence is GLSGAGKS.

This sequence belongs to the ABC transporter superfamily. Phosphonates importer (TC 3.A.1.9.1) family. The complex is composed of two ATP-binding proteins (PhnC), two transmembrane proteins (PhnE) and a solute-binding protein (PhnD).

It is found in the cell membrane. It catalyses the reaction phosphonate(out) + ATP + H2O = phosphonate(in) + ADP + phosphate + H(+). Functionally, part of the ABC transporter complex PhnCDE involved in phosphonates import. Responsible for energy coupling to the transport system. The polypeptide is Phosphonates import ATP-binding protein PhnC (Lactobacillus johnsonii (strain CNCM I-12250 / La1 / NCC 533)).